The primary structure comprises 738 residues: MDCNCFDPQWPADELLMKYQYISDFFIAVAYFSIPIELVYFVQKSAVFPYRWVLVQFGAFIVLCGATHLINLWTSTAHTRTLAIVMTTAKVLTAVVSCATALMLVHIIPDLLSVKTRELFLKNKAAELDREMGLIRTQEETGRYVRMLTHEIRSTLDRHTILKTTLVELGRTLALEECALWMPTPPGLELQLSYTLRHQNPIGFTVPIQLPVINQVFGTNRAVKISPNSPVARLRPAGKYMPGEVVAVRVPLLHLSNFQINDWPELSTKRYALMVLMLPSGSARQWHVHELELVEVVADQVAVALSHAAILEESMRARDLLMEQNVALDLARREAEMAVRARNDFLAVMNHEMRTPMHAIIALSSLLQETELTPEQRLMVETILKSSNLLATLINDVLDLSRLEDGSLQLDVGTFNLHVLFRKVLNLIKPIASVKNCLSRLTCLQICPEFAIGDEKRLMQILLNVVGNAVKFSKEGSVSISAVAAKSESLSDPRAPEFFPVQSENHFYLRVQVKDTGSGINPQDIPKLFCKFAQNQALATKSSGGTGLGLAISKRFVNLMEGHIWIESEGLGKGSTAIFIVKLGIPGRSNEPKLPFMPRLPANHMQMTFQGLKVLIMDDNGFSRMVTKGLLVHLGCDVTTVSSGDECLRVLTQEHKVVFMDVSIPGIDCYEVAVQIHEKFGKHHNRPLIVALTGNTDRVTKENCMRVGMDGVILKPVSVDKMRSVLSELLEHGVILQS.

The next 3 helical transmembrane spans lie at 22–42 (ISDF…VYFV), 53–73 (VLVQ…INLW), and 91–111 (VLTA…IPDL). Cu cation-binding residues include C64 and H68. A GAF domain is found at 157–305 (DRHTILKTTL…VVADQVAVAL (149 aa)). Residues 348–585 (VMNHEMRTPM…TAIFIVKLGI (238 aa)) form the Histidine kinase domain. H351 bears the Phosphohistidine; by autocatalysis mark. Residues 613–730 (KVLIMDDNGF…KMRSVLSELL (118 aa)) enclose the Response regulatory domain. At D661 the chain carries 4-aspartylphosphate.

Belongs to the ethylene receptor family. As to quaternary structure, homodimer; disulfide-linked. It depends on Cu cation as a cofactor. Activation probably requires a transfer of a phosphate group between a His in the transmitter domain and an Asp of the receiver domain.

The protein resides in the endoplasmic reticulum membrane. The enzyme catalyses ATP + protein L-histidine = ADP + protein N-phospho-L-histidine.. Functionally, may act early in the ethylene signal transduction pathway, possibly as an ethylene receptor, or as a regulator of the pathway. This Nicotiana tabacum (Common tobacco) protein is Ethylene receptor (ETR1).